The sequence spans 295 residues: Probable dTDP-4,6-dihydroxy-2-methyloxan-3-one 4-ketoreductase (295 aa).

NADH-binding positions include G10–L12, D36–V37, A60–T62, Y126, and K130. NADPH is bound by residues M11 to L12, D36 to V37, A60 to T62, Y126, and K130. The active-site Proton donor/acceptor is Y126.

It belongs to the dTDP-4-dehydrorhamnose reductase family. Requires Mg(2+) as cofactor.

The protein operates within antibiotic biosynthesis. Involved in the biosynthesis of one of the two 2,6-deoxysugars, dTDP-L-oleandrose, attached to the macrolactone ring oleandolide to produce the aglycone antibiotic oleandomycin. Probably catalyzes the reduction of dTDP-4-keto-2,6-dideoxy-beta-L-galactose to yield dTDP-L-olivose. The chain is Probable dTDP-4,6-dihydroxy-2-methyloxan-3-one 4-ketoreductase from Streptomyces antibioticus.